The primary structure comprises 375 residues: Trans-enoyl reductase iccB (375 aa).

Position 48 to 51 (48 to 51 (VDAK)) interacts with NADP(+). 143–150 (AAVATVGL) contacts substrate. Residues 204-207 (SSAS), Y222, and 269-270 (LD) each bind NADP(+). 289–293 (TYSQF) contributes to the substrate binding site. 358-359 (IK) provides a ligand contact to NADP(+).

The protein belongs to the zinc-containing alcohol dehydrogenase family. In terms of assembly, monomer.

It catalyses the reaction N-[(4E,6E,10S,12Z,14E)-6,10-dimethyl-3-oxohexadeca-4,6,12,14-tetraenoyl]-L-tyrosyl-[ACP] = (3E,5S)-3-[(2E,4E,8S,10E,12Z)-1-hydroxy-4,8-dimethyltetradeca-2,4,10,12-tetraen-1-ylidene]-5-[(4-hydroxyphenyl)methyl]pyrrolidine-2,4-dione + holo-[ACP] + H(+). It functions in the pathway mycotoxin biosynthesis. Trans-enoyl reductase; part of the gene cluster that mediates the biosynthesis of ilicicolin H, a 4-hydroxy-2-pyridonealkaloid that has potent and broad antifungal activities by inhibiting the mitochondrial respiration chain. IccB collaborates with the hybrid PKS-NRPS synthetase iccA to assemble the backbone of ilicicolin H. The PKS portion of iccA and trans-acting enoyl reductase iccB work together to construct an octaketide, and two methyl groups are introduced by the MT domain of iccA during the chain assembly. The nascent chain is then condensed with tyrosine, catalyzed by the iliA C domain, and the resulting PKS-NRPS hybrid is offloaded by the iliA RED domain to form an advanced tetramic acid intermediate. The biosynthesis of ilicicolin H starts with formation of the tetramic acid by the hybrid PKS-NRPS synthetase iccA with the partnering trans-enoyl reductase iccB since iccA lacks a designated enoylreductase (ER) domain. The cytochrome P450 monooxygenase iccC then catalyzes the ring expansion of the tetramate to the acyclic 2-pyridone. The pericyclase iccD further converts the acyclic 2-pyridone into 8-epi-ilicicolin H. Finally, the epimerase iccE converts 8-epi-ilicicolin H into ilicicolin H via epimerization. IccA to iccE are sufficient for ilicicolin H biosynthesis and the roles of the remaining enzymes, iccF, iccG and iccH within the pathway have still to be determined. This Talaromyces variabilis (Penicillium variabile) protein is Trans-enoyl reductase iccB.